The chain runs to 445 residues: 3-phosphoshikimate 1-carboxyvinyltransferase (445 aa).

The segment at 1–25 (MTDSNQPTPLQARKSGALHGTARVP) is disordered. Residues K28, S29, and R33 each coordinate 3-phosphoshikimate. K28 provides a ligand contact to phosphoenolpyruvate. G101 and R129 together coordinate phosphoenolpyruvate. 4 residues coordinate 3-phosphoshikimate: S175, Q177, D328, and K355. Position 177 (Q177) interacts with phosphoenolpyruvate. The active-site Proton acceptor is D328. R359 and R402 together coordinate phosphoenolpyruvate.

This sequence belongs to the EPSP synthase family. Monomer.

The protein resides in the cytoplasm. The catalysed reaction is 3-phosphoshikimate + phosphoenolpyruvate = 5-O-(1-carboxyvinyl)-3-phosphoshikimate + phosphate. It functions in the pathway metabolic intermediate biosynthesis; chorismate biosynthesis; chorismate from D-erythrose 4-phosphate and phosphoenolpyruvate: step 6/7. In terms of biological role, catalyzes the transfer of the enolpyruvyl moiety of phosphoenolpyruvate (PEP) to the 5-hydroxyl of shikimate-3-phosphate (S3P) to produce enolpyruvyl shikimate-3-phosphate and inorganic phosphate. The polypeptide is 3-phosphoshikimate 1-carboxyvinyltransferase (Rhodopseudomonas palustris (strain TIE-1)).